The chain runs to 636 residues: Protein BCAP (636 aa).

Coiled coils occupy residues 36-97 (LSCL…EQKE), 141-220 (ESEN…WNLQ), 249-325 (YKQR…HGKN), 377-484 (ISSE…ECQE), and 519-631 (LEEE…KMNS).

This sequence belongs to the ODF2 family. Mainly expressed in trachea and testis. Not detected in bone marrow, bladder, leukocytes. Only weakly detected in tongue, stomach, brain and ovaries.

The protein localises to the cytoplasm. It localises to the cytoskeleton. Its subcellular location is the microtubule organizing center. The protein resides in the centrosome. It is found in the centriole. The protein localises to the centriolar satellite. It localises to the cilium basal body. In terms of biological role, acts as a suppressor of ciliogenesis, specifically, the initiation of ciliogenesis. This is Protein BCAP from Homo sapiens (Human).